We begin with the raw amino-acid sequence, 379 residues long: Dual-specificity RNA methyltransferase RlmN (379 aa).

Glu95 functions as the Proton acceptor in the catalytic mechanism. The region spanning Glu101–Asp345 is the Radical SAM core domain. A disulfide bridge connects residues Cys108 and Cys350. The [4Fe-4S] cluster site is built by Cys115, Cys119, and Cys122. S-adenosyl-L-methionine is bound by residues Gly176–Glu177, Ser208, Ser230–His232, and Asn307. Cys350 functions as the S-methylcysteine intermediate in the catalytic mechanism.

It belongs to the radical SAM superfamily. RlmN family. [4Fe-4S] cluster serves as cofactor.

Its subcellular location is the cytoplasm. It catalyses the reaction adenosine(2503) in 23S rRNA + 2 reduced [2Fe-2S]-[ferredoxin] + 2 S-adenosyl-L-methionine = 2-methyladenosine(2503) in 23S rRNA + 5'-deoxyadenosine + L-methionine + 2 oxidized [2Fe-2S]-[ferredoxin] + S-adenosyl-L-homocysteine. The enzyme catalyses adenosine(37) in tRNA + 2 reduced [2Fe-2S]-[ferredoxin] + 2 S-adenosyl-L-methionine = 2-methyladenosine(37) in tRNA + 5'-deoxyadenosine + L-methionine + 2 oxidized [2Fe-2S]-[ferredoxin] + S-adenosyl-L-homocysteine. Functionally, specifically methylates position 2 of adenine 2503 in 23S rRNA and position 2 of adenine 37 in tRNAs. m2A2503 modification seems to play a crucial role in the proofreading step occurring at the peptidyl transferase center and thus would serve to optimize ribosomal fidelity. The protein is Dual-specificity RNA methyltransferase RlmN of Burkholderia vietnamiensis (strain G4 / LMG 22486) (Burkholderia cepacia (strain R1808)).